We begin with the raw amino-acid sequence, 217 residues long: Protein DJ-1alpha (217 aa).

Cysteine 133 functions as the Nucleophile in the catalytic mechanism. Position 133 is a cysteine sulfinic acid (-SO2H); alternate (cysteine 133).

Expressed in testis (at protein level).

It is found in the cytoplasm. The protein resides in the nucleus. The protein localises to the mitochondrion. Plays an important role in cell protection against oxidative stress and cell death acting as oxidative stress sensor. Does not play a role in methylglyoxal detoxification. The polypeptide is Protein DJ-1alpha (Drosophila melanogaster (Fruit fly)).